The chain runs to 504 residues: Maturase K (504 aa).

It belongs to the intron maturase 2 family. MatK subfamily.

It localises to the plastid. It is found in the chloroplast. In terms of biological role, usually encoded in the trnK tRNA gene intron. Probably assists in splicing its own and other chloroplast group II introns. This Matthiola incana (Common stock) protein is Maturase K.